Here is a 243-residue protein sequence, read N- to C-terminus: GVDSHPPALPWPHFQWFQGLDWRSVRRGKEVYEQVFAPCHSLSFIKYRHFEAFMSKEEVKNMAASFEVDDDPDEKGEARKRPGKRFDTVVQPYKNEQEARYANNGALPPDLSVITNARHGGVDYIYALLTGYGRPVPGGVQLSTTQWYNPYFHGGIIGMPPPLTDDMIEYEDGTPASVPQMAKDVTCFLEWCSNPWWDERKLLGYKTIATLAVIAVSSGYYNRFLSGLWRSRRLAFRPFNYSK.

The Mitochondrial intermembrane portion of the chain corresponds to 1 to 201; it reads GVDSHPPALP…CSNPWWDERK (201 aa). One can recognise a Cytochrome c domain in the interval 5-194; sequence HPPALPWPHF…VTCFLEWCSN (190 aa). Heme contacts are provided by C39, H40, and M159. Residues 202–221 form a helical membrane-spanning segment; that stretch reads LLGYKTIATLAVIAVSSGYY. Over 222-243 the chain is Mitochondrial matrix; it reads NRFLSGLWRSRRLAFRPFNYSK.

Belongs to the cytochrome c family. Component of the ubiquinol-cytochrome c oxidoreductase (cytochrome b-c1 complex, complex III, CIII), a multisubunit enzyme composed of 3 respiratory subunits cytochrome b, cytochrome c1 and Rieske protein, 2 core protein subunits, and additional low-molecular weight protein subunits. The complex exists as an obligatory dimer and forms supercomplexes (SCs) in the inner mitochondrial membrane with cytochrome c oxidase (complex IV, CIV). Heme serves as cofactor.

Its subcellular location is the mitochondrion inner membrane. It carries out the reaction a quinol + 2 Fe(III)-[cytochrome c](out) = a quinone + 2 Fe(II)-[cytochrome c](out) + 2 H(+)(out). Functionally, component of the ubiquinol-cytochrome c oxidoreductase, a multisubunit transmembrane complex that is part of the mitochondrial electron transport chain which drives oxidative phosphorylation. The respiratory chain contains 3 multisubunit complexes succinate dehydrogenase (complex II, CII), ubiquinol-cytochrome c oxidoreductase (cytochrome b-c1 complex, complex III, CIII) and cytochrome c oxidase (complex IV, CIV), that cooperate to transfer electrons derived from NADH and succinate to molecular oxygen, creating an electrochemical gradient over the inner membrane that drives transmembrane transport and the ATP synthase. The cytochrome b-c1 complex catalyzes electron transfer from ubiquinol to cytochrome c, linking this redox reaction to translocation of protons across the mitochondrial inner membrane, with protons being carried across the membrane as hydrogens on the quinol. In the process called Q cycle, 2 protons are consumed from the matrix, 4 protons are released into the intermembrane space and 2 electrons are passed to cytochrome c. Cytochrome c1 is a catalytic core subunit containing a c-type heme. It transfers electrons from the [2Fe-2S] iron-sulfur cluster of the Rieske protein to cytochrome c. This is Cytochrome c1, heme protein from Euglena gracilis.